The primary structure comprises 102 residues: RNA-binding protein Hfq (102 aa).

Residues 9-68 (DPFLNALRRERVPVSIYLVNGIKLQGQIESFDQFVILLKNTVSQMVYKHAISTVVPSRPV) form the Sm domain. The interval 63-102 (VPSRPVSHHSNNAGGGSNNYHHSNNAQPSSAASQDSEDAE) is disordered. Residues 70–96 (HHSNNAGGGSNNYHHSNNAQPSSAASQ) show a composition bias toward low complexity.

The protein belongs to the Hfq family. In terms of assembly, homohexamer.

RNA chaperone that binds small regulatory RNA (sRNAs) and mRNAs to facilitate mRNA translational regulation in response to envelope stress, environmental stress and changes in metabolite concentrations. Also binds with high specificity to tRNAs. This is RNA-binding protein Hfq from Cronobacter sakazakii (strain ATCC BAA-894) (Enterobacter sakazakii).